Here is a 206-residue protein sequence, read N- to C-terminus: Outer-membrane lipoprotein carrier protein (206 aa).

An N-terminal signal peptide occupies residues 1-23 (MKPLFPMLTAAAIAAGLAAPAQA).

The protein belongs to the LolA family. In terms of assembly, monomer.

It is found in the periplasm. In terms of biological role, participates in the translocation of lipoproteins from the inner membrane to the outer membrane. Only forms a complex with a lipoprotein if the residue after the N-terminal Cys is not an aspartate (The Asp acts as a targeting signal to indicate that the lipoprotein should stay in the inner membrane). The sequence is that of Outer-membrane lipoprotein carrier protein from Chromobacterium violaceum (strain ATCC 12472 / DSM 30191 / JCM 1249 / CCUG 213 / NBRC 12614 / NCIMB 9131 / NCTC 9757 / MK).